A 500-amino-acid chain; its full sequence is Aspartyl/glutamyl-tRNA(Asn/Gln) amidotransferase subunit B (500 aa).

This sequence belongs to the GatB/GatE family. GatB subfamily. Heterotrimer of A, B and C subunits.

It carries out the reaction L-glutamyl-tRNA(Gln) + L-glutamine + ATP + H2O = L-glutaminyl-tRNA(Gln) + L-glutamate + ADP + phosphate + H(+). It catalyses the reaction L-aspartyl-tRNA(Asn) + L-glutamine + ATP + H2O = L-asparaginyl-tRNA(Asn) + L-glutamate + ADP + phosphate + 2 H(+). Functionally, allows the formation of correctly charged Asn-tRNA(Asn) or Gln-tRNA(Gln) through the transamidation of misacylated Asp-tRNA(Asn) or Glu-tRNA(Gln) in organisms which lack either or both of asparaginyl-tRNA or glutaminyl-tRNA synthetases. The reaction takes place in the presence of glutamine and ATP through an activated phospho-Asp-tRNA(Asn) or phospho-Glu-tRNA(Gln). The protein is Aspartyl/glutamyl-tRNA(Asn/Gln) amidotransferase subunit B of Thermosynechococcus vestitus (strain NIES-2133 / IAM M-273 / BP-1).